Reading from the N-terminus, the 84-residue chain is MPRPAYRSRSVRRIKVKTPGGRTVIHYEKRAKGVPKCPITGLPIGGMNKKVYRFGIKIRAPSRPYGGVYSHKVLARALRLAVRK.

This sequence belongs to the eukaryotic ribosomal protein eL34 family.

The chain is Large ribosomal subunit protein eL34 (ribL34e) from Pyrobaculum aerophilum (strain ATCC 51768 / DSM 7523 / JCM 9630 / CIP 104966 / NBRC 100827 / IM2).